Consider the following 317-residue polypeptide: Transaldolase (317 aa).

The active-site Schiff-base intermediate with substrate is K126.

This sequence belongs to the transaldolase family. Type 1 subfamily. Homodimer.

Its subcellular location is the cytoplasm. The catalysed reaction is D-sedoheptulose 7-phosphate + D-glyceraldehyde 3-phosphate = D-erythrose 4-phosphate + beta-D-fructose 6-phosphate. The protein operates within carbohydrate degradation; pentose phosphate pathway; D-glyceraldehyde 3-phosphate and beta-D-fructose 6-phosphate from D-ribose 5-phosphate and D-xylulose 5-phosphate (non-oxidative stage): step 2/3. Functionally, transaldolase is important for the balance of metabolites in the pentose-phosphate pathway. In Burkholderia vietnamiensis (strain G4 / LMG 22486) (Burkholderia cepacia (strain R1808)), this protein is Transaldolase.